The sequence spans 406 residues: Putative phosphate permease TK2061 (406 aa).

The next 10 helical transmembrane spans lie at 2–22 (AVMD…AWAI), 45–65 (AVLI…KSVT), 82–102 (TVLI…LVIA), 115–135 (IIGG…VNWG), 139–159 (QVVL…FLVF), 182–202 (FWIG…VLHG), 208–228 (GVLF…FLTL), 288–308 (VPVP…GVAT), 324–346 (LTNT…ASWL), and 385–405 (FVTV…LMIV).

It belongs to the inorganic phosphate transporter (PiT) (TC 2.A.20) family.

The protein resides in the cell membrane. Its function is as follows. Potential transporter for phosphate. The chain is Putative phosphate permease TK2061 from Thermococcus kodakarensis (strain ATCC BAA-918 / JCM 12380 / KOD1) (Pyrococcus kodakaraensis (strain KOD1)).